The sequence spans 122 residues: Large ribosomal subunit protein uL14 (122 aa).

This sequence belongs to the universal ribosomal protein uL14 family. As to quaternary structure, part of the 50S ribosomal subunit. Forms a cluster with proteins L3 and L19. In the 70S ribosome, L14 and L19 interact and together make contacts with the 16S rRNA in bridges B5 and B8.

Its function is as follows. Binds to 23S rRNA. Forms part of two intersubunit bridges in the 70S ribosome. The polypeptide is Large ribosomal subunit protein uL14 (Flavobacterium johnsoniae (strain ATCC 17061 / DSM 2064 / JCM 8514 / BCRC 14874 / CCUG 350202 / NBRC 14942 / NCIMB 11054 / UW101) (Cytophaga johnsonae)).